Consider the following 629-residue polypeptide: RNA polymerase sigma factor RpoD (629 aa).

The segment at 183–228 (HNGLDEDFSDEDDEEESSNADVEDNEDEEDNESESTSDSSDSDNSI) is disordered. Positions 187 to 228 (DEDFSDEDDEEESSNADVEDNEDEEDNESESTSDSSDSDNSI) are enriched in acidic residues. The tract at residues 395-465 (MVEANLRLVI…TRSIADQART (71 aa)) is sigma-70 factor domain-2. An Interaction with polymerase core subunit RpoC motif is present at residues 419–422 (DLIQ). The sigma-70 factor domain-3 stretch occupies residues 474 to 550 (ETINKLNRIS…DSTLELPLDS (77 aa)). The sigma-70 factor domain-4 stretch occupies residues 563-616 (VLEGLTPREAKVLRMRFGIDMNTDHTLEEVGKQFDVTRERIRQIEAKALRKLRH). Residues 589–608 (LEEVGKQFDVTRERIRQIEA) constitute a DNA-binding region (H-T-H motif).

It belongs to the sigma-70 factor family. RpoD/SigA subfamily. Interacts transiently with the RNA polymerase catalytic core.

It is found in the cytoplasm. Functionally, sigma factors are initiation factors that promote the attachment of RNA polymerase to specific initiation sites and are then released. This sigma factor is the primary sigma factor during exponential growth. This chain is RNA polymerase sigma factor RpoD, found in Haemophilus influenzae (strain ATCC 51907 / DSM 11121 / KW20 / Rd).